A 524-amino-acid polypeptide reads, in one-letter code: tRNA-2-methylthio-N(6)-dimethylallyladenosine synthase (524 aa).

Over residues M1–A12 the composition is skewed to basic and acidic residues. A disordered region spans residues M1–G23. An MTTase N-terminal domain is found at R27–H143. [4Fe-4S] cluster contacts are provided by C36, C72, C106, C180, C184, and C187. Residues R166–E402 enclose the Radical SAM core domain. The region spanning Q405–V476 is the TRAM domain.

The protein belongs to the methylthiotransferase family. MiaB subfamily. In terms of assembly, monomer. Requires [4Fe-4S] cluster as cofactor.

The protein resides in the cytoplasm. It catalyses the reaction N(6)-dimethylallyladenosine(37) in tRNA + (sulfur carrier)-SH + AH2 + 2 S-adenosyl-L-methionine = 2-methylsulfanyl-N(6)-dimethylallyladenosine(37) in tRNA + (sulfur carrier)-H + 5'-deoxyadenosine + L-methionine + A + S-adenosyl-L-homocysteine + 2 H(+). Catalyzes the methylthiolation of N6-(dimethylallyl)adenosine (i(6)A), leading to the formation of 2-methylthio-N6-(dimethylallyl)adenosine (ms(2)i(6)A) at position 37 in tRNAs that read codons beginning with uridine. The chain is tRNA-2-methylthio-N(6)-dimethylallyladenosine synthase from Corynebacterium efficiens (strain DSM 44549 / YS-314 / AJ 12310 / JCM 11189 / NBRC 100395).